The sequence spans 389 residues: UDP-N-acetylglucosamine--N-acetylmuramyl-(pentapeptide) pyrophosphoryl-undecaprenol N-acetylglucosamine transferase (389 aa).

UDP-N-acetyl-alpha-D-glucosamine is bound by residues 39 to 41 (TGG), N157, R193, S221, I275, 294 to 299 (ALTVSE), and Q320.

The protein belongs to the glycosyltransferase 28 family. MurG subfamily.

It is found in the cell inner membrane. The catalysed reaction is di-trans,octa-cis-undecaprenyl diphospho-N-acetyl-alpha-D-muramoyl-L-alanyl-D-glutamyl-meso-2,6-diaminopimeloyl-D-alanyl-D-alanine + UDP-N-acetyl-alpha-D-glucosamine = di-trans,octa-cis-undecaprenyl diphospho-[N-acetyl-alpha-D-glucosaminyl-(1-&gt;4)]-N-acetyl-alpha-D-muramoyl-L-alanyl-D-glutamyl-meso-2,6-diaminopimeloyl-D-alanyl-D-alanine + UDP + H(+). Its pathway is cell wall biogenesis; peptidoglycan biosynthesis. In terms of biological role, cell wall formation. Catalyzes the transfer of a GlcNAc subunit on undecaprenyl-pyrophosphoryl-MurNAc-pentapeptide (lipid intermediate I) to form undecaprenyl-pyrophosphoryl-MurNAc-(pentapeptide)GlcNAc (lipid intermediate II). This is UDP-N-acetylglucosamine--N-acetylmuramyl-(pentapeptide) pyrophosphoryl-undecaprenol N-acetylglucosamine transferase from Saccharophagus degradans (strain 2-40 / ATCC 43961 / DSM 17024).